We begin with the raw amino-acid sequence, 202 residues long: Small ribosomal subunit protein uS4c (202 aa).

The S4 RNA-binding domain occupies 90–158 (MRLDNIIFRL…MKRSRDSYEK (69 aa)).

Belongs to the universal ribosomal protein uS4 family. Part of the 30S ribosomal subunit. Contacts protein S5. The interaction surface between S4 and S5 is involved in control of translational fidelity.

Its subcellular location is the plastid. It is found in the chloroplast. One of the primary rRNA binding proteins, it binds directly to 16S rRNA where it nucleates assembly of the body of the 30S subunit. In terms of biological role, with S5 and S12 plays an important role in translational accuracy. The protein is Small ribosomal subunit protein uS4c (rps4) of Anthoceros angustus (Hornwort).